A 526-amino-acid chain; its full sequence is Protein spinster homolog 1 (526 aa).

The disordered stretch occupies residues 1–44 (MTSRRSHGDVTPFLTQADNTEEEGVRDPESQSSDEEEEEGKDHG). Helical transmembrane passes span 59-79 (VIIV…RFTV), 98-118 (GLVQ…FGYL), 126-146 (LIMC…SFVS), 159-179 (LVGV…ADLF), 187-207 (MLSF…IVGS), 218-238 (WALR…IFVA), 272-292 (FILS…LALW), 321-341 (MIFG…GVEI), 355-375 (LVCA…LAFA), 384-404 (VFIF…ADIL), 419-439 (LQIV…IGVI), and 463-483 (MICA…ALFI).

It belongs to the major facilitator superfamily. Spinster (TC 2.A.1.49) family.

The protein localises to the lysosome membrane. It carries out the reaction a 1-acyl-sn-glycero-3-phosphocholine(out) + H(+)(out) = a 1-acyl-sn-glycero-3-phosphocholine(in) + H(+)(in). The catalysed reaction is a 1-acyl-sn-glycero-3-phosphoethanolamine(out) + H(+)(out) = a 1-acyl-sn-glycero-3-phosphoethanolamine(in) + H(+)(in). It catalyses the reaction a 1-O-(1Z-alkenyl)-sn-glycero-3-phosphocholine(out) + H(+)(out) = a 1-O-(1Z-alkenyl)-sn-glycero-3-phosphocholine(in) + H(+)(in). The enzyme catalyses a 1-O-(1Z-alkenyl)-sn-glycero-3-phosphoethanolamine(out) + H(+)(out) = a 1-O-(1Z-alkenyl)-sn-glycero-3-phosphoethanolamine(in) + H(+)(in). Functionally, mediates the rate-limiting, proton-dependent, lysosomal efflux of lysophospholipids. Selective for zwitterionic headgroups such as lysophosphatidylcholine (LPC) and lysophosphatidylethanolamine (LPE). Essential player in lysosomal homeostasis. The polypeptide is Protein spinster homolog 1 (spns1) (Xenopus laevis (African clawed frog)).